Reading from the N-terminus, the 130-residue chain is Small ribosomal subunit protein uS8 (130 aa).

The protein belongs to the universal ribosomal protein uS8 family. As to quaternary structure, part of the 30S ribosomal subunit.

One of the primary rRNA binding proteins, it binds directly to 16S rRNA central domain where it helps coordinate assembly of the platform of the 30S subunit. The protein is Small ribosomal subunit protein uS8 of Thermococcus sibiricus (strain DSM 12597 / MM 739).